A 419-amino-acid chain; its full sequence is G protein-activated inward rectifier potassium channel 4 (419 aa).

At 1–86 the chain is on the cytoplasmic side; sequence MAGDSRNAMN…LFTTLVDLKW (86 aa). A Phosphoserine modification is found at serine 5. The helical transmembrane segment at 87–111 threads the bilayer; it reads RFNLLVFTMVYTITWLFFGFIWWLI. Topologically, residues 112-135 are extracellular; sequence AYVRGDLDHVGDQEWIPCVENLSG. An intramembrane region (helical; Pore-forming) is located at residues 136–147; the sequence is FVSAFLFSIETE. Residues 148–154 constitute an intramembrane region (pore-forming); the sequence is TTIGYGF. The Selectivity filter motif lies at 149-154; it reads TIGYGF. The Extracellular segment spans residues 155–163; it reads RVITEKCPE. The helical transmembrane segment at 164 to 185 threads the bilayer; sequence GIILLLVQAILGSIVNAFMVGC. The Cytoplasmic segment spans residues 186 to 419; the sequence is MFVKISQPKK…SVSQATRGSM (234 aa). Residues 388 to 419 are disordered; it reads GCAEAGNEAEAEKDEEGEPNGLSVSQATRGSM. The span at 394–405 shows a compositional bias: acidic residues; it reads NEAEAEKDEEGE. The segment covering 409–419 has biased composition (polar residues); that stretch reads LSVSQATRGSM.

It belongs to the inward rectifier-type potassium channel (TC 1.A.2.1) family. KCNJ5 subfamily. As to quaternary structure, associates with KCNJ3/GIRK1 to form a G-protein-activated heteromultimer pore-forming unit. Associates with KCNJ6/GRIK2 to form a G-protein-activated heteromultimer pore-forming unit. As to expression, expressed in the heart.

It is found in the membrane. It catalyses the reaction K(+)(in) = K(+)(out). Its activity is regulated as follows. Heteromultimer composed of KCNJ3/GIRK1 and KCNJ5/GIRK4 is activated by phosphatidylinositol 4,5 biphosphate (PtdIns(4,5)P2). Functionally, inward rectifier potassium channels are characterized by a greater tendency to allow potassium to flow into the cell rather than out of it. Their voltage dependence is regulated by the concentration of extracellular potassium; as external potassium is raised, the voltage range of the channel opening shifts to more positive voltages. The inward rectification is mainly due to the blockage of outward current by internal magnesium. Can be blocked by external barium. This potassium channel is controlled by G proteins. Forms a functional channel in association with KCNJ3/GIRK1. In Mus musculus (Mouse), this protein is G protein-activated inward rectifier potassium channel 4 (Kcnj5).